The following is a 1023-amino-acid chain: Sodium/potassium-transporting ATPase subunit alpha-1 (1023 aa).

A propeptide spanning residues 1–5 (MGKGV) is cleaved from the precursor. Residues 1–11 (MGKGVGRDKYE) show a composition bias toward basic and acidic residues. Residues 1–39 (MGKGVGRDKYEPAAVSEQGDKKGKKGKKDRDMDELKKEV) form a disordered region. Residues 6–87 (GRDKYEPAAV…NALTPPPTTP (82 aa)) are Cytoplasmic-facing. The residue at position 9 (Lys-9) is an N6-acetyllysine. Position 10 is a phosphotyrosine (Tyr-10). Ser-16 bears the Phosphoserine mark. Lys-21 carries the post-translational modification N6-acetyllysine. Positions 28–39 (KDRDMDELKKEV) are enriched in basic and acidic residues. A phosphoserine mark is found at Ser-40 and Ser-47. Positions 82-84 (PPP) are phosphoinositide-3 kinase binding. A helical membrane pass occupies residues 88–108 (EWIKFCRQLFGGFSMLLWIGA). Residues 109-131 (ILCFLAYSIQAATEEEPQNDNLY) lie on the Extracellular side of the membrane. Residues 132-152 (LGVVLSAVVIITGCFSYYQEA) traverse the membrane as a helical segment. Topologically, residues 153-288 (KSSKIMESFK…GGQTPIAAEI (136 aa)) are cytoplasmic. The tract at residues 216–235 (SSLTGESEPQTRSPDFTNEN) is disordered. A Phosphoserine modification is found at Ser-228. Position 260 is a phosphotyrosine (Tyr-260). The chain crosses the membrane as a helical span at residues 289–308 (EHFIHIITGVAVFLGVSFFI). Residues 309–320 (LSLILEYTWLEA) lie on the Extracellular side of the membrane. Residues 321–338 (VIFLIGIIVANVPEGLLA) traverse the membrane as a helical segment. Residues 339–772 (TVTVCLTLTA…EEGRLIFDNL (434 aa)) are Cytoplasmic-facing. Asp-376 functions as the 4-aspartylphosphate intermediate in the catalytic mechanism. A phosphoserine mark is found at Ser-452 and Ser-484. Lys-487 serves as a coordination point for ATP. A Phosphotyrosine modification is found at Tyr-542. Positions 596-717 (RAAVPDAVGK…QGAIVAVTGD (122 aa)) are mediates interaction with SCN7A. At Lys-661 the chain carries N6-succinyllysine. Ser-668 and Ser-675 each carry phosphoserine. Asp-717 and Asp-721 together coordinate Mg(2+). A helical transmembrane segment spans residues 773 to 792 (KKSIAYTLTSNIPEITPFLI). At 793-802 (FIIANIPLPL) the chain is on the extracellular side. A helical membrane pass occupies residues 803–823 (GTVTILCIDLGTDMVPAISLA). Residues 824–843 (YEQAESDIMKRQPRNPKTDK) are Cytoplasmic-facing. Residues 844–866 (LVNERLISMAYGQIGMIQALGGF) form a helical membrane-spanning segment. Residues 867-918 (FTYFVILAENGFLPIHLLGLRVDWDDRWINDVEDSYGQQWTYEQRKIVEFTC) lie on the Extracellular side of the membrane. A helical transmembrane segment spans residues 919–938 (HTAFFVSIVVVQWADLVICK). Topologically, residues 939 to 951 (TRRNSVFQQGMKN) are cytoplasmic. Position 943 is a phosphoserine; by PKA (Ser-943). Residues 952–970 (KILIFGLFEETALAAFLSY) form a helical membrane-spanning segment. The Extracellular portion of the chain corresponds to 971–985 (CPGMGVALRMYPLKP). The chain crosses the membrane as a helical span at residues 986–1006 (TWWFCAFPYSLLIFVYDEVRK). Residues 1007-1023 (LIIRRRPGGWVEKETYY) lie on the Cytoplasmic side of the membrane.

It belongs to the cation transport ATPase (P-type) (TC 3.A.3) family. Type IIC subfamily. In terms of assembly, the sodium/potassium-transporting ATPase is composed of a catalytic alpha subunit, an auxiliary non-catalytic beta subunit and an additional regulatory subunit. Interacts with regulatory subunit FXYD1. Interacts with regulatory subunit FXYD3. Interacts with SIK1. Binds the HLA class II histocompatibility antigen DR1. Interacts with SLC35G1 and STIM1. Interacts with CLN3; this interaction regulates the sodium/potassium-transporting ATPase complex localization at the plasma membrane. Interacts with SCN7A; activates ATP1A1 P-type sodium:potassium-exchanging transporter activity which indirectly signals to nearby neurons to regulate sodium homeostasis. In terms of processing, phosphorylation on Tyr-10 modulates pumping activity. Phosphorylation of Ser-943 by PKA modulates the response of ATP1A1 to PKC. Dephosphorylation by protein phosphatase 2A (PP2A) following increases in intracellular sodium, leading to increase catalytic activity.

It localises to the cell membrane. It is found in the basolateral cell membrane. Its subcellular location is the sarcolemma. The protein resides in the cell projection. The protein localises to the axon. It localises to the melanosome. It catalyses the reaction K(+)(out) + Na(+)(in) + ATP + H2O = K(+)(in) + Na(+)(out) + ADP + phosphate + H(+). Its function is as follows. This is the catalytic component of the active enzyme, which catalyzes the hydrolysis of ATP coupled with the exchange of sodium and potassium ions across the plasma membrane. This action creates the electrochemical gradient of sodium and potassium ions, providing the energy for active transport of various nutrients. Could also be part of an osmosensory signaling pathway that senses body-fluid sodium levels and controls salt intake behavior as well as voluntary water intake to regulate sodium homeostasis. In Homo sapiens (Human), this protein is Sodium/potassium-transporting ATPase subunit alpha-1 (ATP1A1).